The following is a 203-amino-acid chain: Guanylate kinase (203 aa).

One can recognise a Guanylate kinase-like domain in the interval 5-183 (GVLYILSAPS…AVEELKSVII (179 aa)). 12 to 19 (APSGAGKT) serves as a coordination point for ATP.

Belongs to the guanylate kinase family.

It localises to the cytoplasm. The catalysed reaction is GMP + ATP = GDP + ADP. Functionally, essential for recycling GMP and indirectly, cGMP. The protein is Guanylate kinase of Geobacter sulfurreducens (strain ATCC 51573 / DSM 12127 / PCA).